The following is a 329-amino-acid chain: uncharacterized protein (329 aa).

Residues 38–184 (IVKLILKSQE…MACLMRAKNF (147 aa)) form the SIS domain. ATP is bound at residue 56-61 (GVGKSA). 2 CBS domains span residues 211-267 (QTTN…GVSL) and 270-329 (EVRH…GLKA).

This sequence belongs to the SIS family. GutQ/KpsF subfamily.

This is an uncharacterized protein from Helicobacter pylori (strain ATCC 700392 / 26695) (Campylobacter pylori).